A 233-amino-acid chain; its full sequence is MADS-box transcription factor 56 (233 aa).

In terms of domain architecture, MADS-box spans 1–61; sequence MVRGRTELKR…GRLYEFASAP (61 aa). The K-box domain maps to 87–177; the sequence is IQQVKDDTLG…RGKHRNLEAA (91 aa).

Its subcellular location is the nucleus. Probable transcription factor. This chain is MADS-box transcription factor 56 (MADS56), found in Oryza sativa subsp. indica (Rice).